Here is a 157-residue protein sequence, read N- to C-terminus: Phosphopantetheine adenylyltransferase (157 aa).

Ser-8 lines the substrate pocket. ATP is bound by residues 8 to 9 (SF) and His-16. Residues Lys-40, Thr-72, and Arg-86 each coordinate substrate. ATP contacts are provided by residues 87–89 (GLR), Glu-97, and 122–128 (YSFLSSS).

Belongs to the bacterial CoaD family. Homohexamer. Requires Mg(2+) as cofactor.

The protein localises to the cytoplasm. It carries out the reaction (R)-4'-phosphopantetheine + ATP + H(+) = 3'-dephospho-CoA + diphosphate. It participates in cofactor biosynthesis; coenzyme A biosynthesis; CoA from (R)-pantothenate: step 4/5. Its function is as follows. Reversibly transfers an adenylyl group from ATP to 4'-phosphopantetheine, yielding dephospho-CoA (dPCoA) and pyrophosphate. This is Phosphopantetheine adenylyltransferase from Gloeothece citriformis (strain PCC 7424) (Cyanothece sp. (strain PCC 7424)).